We begin with the raw amino-acid sequence, 100 residues long: Urease subunit gamma (100 aa).

The protein belongs to the urease gamma subunit family. Heterotrimer of UreA (gamma), UreB (beta) and UreC (alpha) subunits. Three heterotrimers associate to form the active enzyme.

It is found in the cytoplasm. It carries out the reaction urea + 2 H2O + H(+) = hydrogencarbonate + 2 NH4(+). It participates in nitrogen metabolism; urea degradation; CO(2) and NH(3) from urea (urease route): step 1/1. This Corynebacterium urealyticum (strain ATCC 43042 / DSM 7109) protein is Urease subunit gamma.